We begin with the raw amino-acid sequence, 346 residues long: Phosphoribosylformylglycinamidine cyclo-ligase (346 aa).

Belongs to the AIR synthase family.

The protein resides in the cytoplasm. It carries out the reaction 2-formamido-N(1)-(5-O-phospho-beta-D-ribosyl)acetamidine + ATP = 5-amino-1-(5-phospho-beta-D-ribosyl)imidazole + ADP + phosphate + H(+). Its pathway is purine metabolism; IMP biosynthesis via de novo pathway; 5-amino-1-(5-phospho-D-ribosyl)imidazole from N(2)-formyl-N(1)-(5-phospho-D-ribosyl)glycinamide: step 2/2. This chain is Phosphoribosylformylglycinamidine cyclo-ligase, found in Synechococcus sp. (strain CC9311).